The chain runs to 429 residues: Saccharopine dehydrogenase-like oxidoreductase (429 aa).

The residue at position 2 (Ala-2) is an N-acetylalanine. Ser-217 carries the phosphoserine modification.

This sequence belongs to the saccharopine dehydrogenase family.

The polypeptide is Saccharopine dehydrogenase-like oxidoreductase (SCCPDH) (Homo sapiens (Human)).